A 127-amino-acid chain; its full sequence is Large ribosomal subunit protein mL55 (127 aa).

The transit peptide at 1–32 (MPLAILLSLLRHCGVRAALPTPRHLHTSPWRA) directs the protein to the mitochondrion. A Phosphoserine modification is found at Ser84.

It belongs to the mitochondrion-specific ribosomal protein mL55 family. As to quaternary structure, component of the mitochondrial ribosome large subunit (39S) which comprises a 16S rRNA and about 50 distinct proteins.

Its subcellular location is the mitochondrion. In Mus musculus (Mouse), this protein is Large ribosomal subunit protein mL55 (Mrpl55).